The chain runs to 735 residues: DNA replication licensing factor mcm5-A (735 aa).

In terms of domain architecture, MCM spans 332–538 (IYETVAKSIA…RDMTLAKHVM (207 aa)). Residue R372 coordinates ADP. The Arginine finger signature appears at 513-516 (SRFD).

Belongs to the MCM family. Component of the mcm2-7 complex (RLF-M). The complex forms a toroidal hexameric ring with the proposed subunit order mcm2-mcm6-mcm4-mcm7-mcm3-mcm5. The heterodimer of mmcm3/mcm5 interacts with mcm4, mmcm6, mcm7 and weakly with mcm2. Component of the CMG helicase complex, composed of the mcm2-7 complex, the GINS complex and cdc45.

Its subcellular location is the nucleus. The protein resides in the chromosome. It catalyses the reaction ATP + H2O = ADP + phosphate + H(+). In terms of biological role, acts as a component of the MCM2-7 complex (MCM complex) which is the replicative helicase essential for 'once per cell cycle' DNA replication initiation and elongation in eukaryotic cells. Core component of CDC45-MCM-GINS (CMG) helicase, the molecular machine that unwinds template DNA during replication, and around which the replisome is built. The active ATPase sites in the MCM2-7 ring are formed through the interaction surfaces of two neighboring subunits such that a critical structure of a conserved arginine finger motif is provided in trans relative to the ATP-binding site of the Walker A box of the adjacent subunit. The six ATPase active sites, however, are likely to contribute differentially to the complex helicase activity. The protein is DNA replication licensing factor mcm5-A (mcm5-a) of Xenopus laevis (African clawed frog).